A 40-amino-acid chain; its full sequence is Photosystem II reaction center protein Y (40 aa).

The chain crosses the membrane as a helical span at residues 5 to 23; the sequence is LVLVASPILLALGWAGFNI.

Belongs to the PsbY family. In terms of assembly, PSII is composed of 1 copy each of membrane proteins PsbA, PsbB, PsbC, PsbD, PsbE, PsbF, PsbH, PsbI, PsbJ, PsbK, PsbL, PsbM, PsbT, PsbX, PsbY, PsbZ, Psb30/Ycf12, peripheral proteins PsbO, CyanoQ (PsbQ), PsbU, PsbV and a large number of cofactors. It forms dimeric complexes.

Its subcellular location is the cellular thylakoid membrane. In terms of biological role, loosely associated component of the core of photosystem II (PSII), it is not always seen in crystals. PSII is a light-driven water plastoquinone oxidoreductase, using light energy to abstract electrons from H(2)O, generating a proton gradient subsequently used for ATP formation. This Synechococcus sp. (strain WH7803) protein is Photosystem II reaction center protein Y.